Reading from the N-terminus, the 196-residue chain is Phosphoheptose isomerase (196 aa).

One can recognise an SIS domain in the interval 36–196 (MAQALQAEGK…LIDQHLFGGA (161 aa)). Residue 51 to 53 (NGG) participates in substrate binding. Residues histidine 60 and glutamate 64 each coordinate Zn(2+). Residues glutamate 64, 93-94 (ND), 119-121 (STS), serine 124, and glutamine 174 each bind substrate. 2 residues coordinate Zn(2+): glutamine 174 and histidine 182.

Belongs to the SIS family. GmhA subfamily. In terms of assembly, homotetramer. Zn(2+) serves as cofactor.

Its subcellular location is the cytoplasm. The enzyme catalyses 2 D-sedoheptulose 7-phosphate = D-glycero-alpha-D-manno-heptose 7-phosphate + D-glycero-beta-D-manno-heptose 7-phosphate. It functions in the pathway carbohydrate biosynthesis; D-glycero-D-manno-heptose 7-phosphate biosynthesis; D-glycero-alpha-D-manno-heptose 7-phosphate and D-glycero-beta-D-manno-heptose 7-phosphate from sedoheptulose 7-phosphate: step 1/1. Its function is as follows. Catalyzes the isomerization of sedoheptulose 7-phosphate in D-glycero-D-manno-heptose 7-phosphate. The polypeptide is Phosphoheptose isomerase (Alkalilimnicola ehrlichii (strain ATCC BAA-1101 / DSM 17681 / MLHE-1)).